The sequence spans 104 residues: Integration host factor subunit alpha (104 aa).

Belongs to the bacterial histone-like protein family. In terms of assembly, heterodimer of an alpha and a beta chain.

Its function is as follows. This protein is one of the two subunits of integration host factor, a specific DNA-binding protein that functions in genetic recombination as well as in transcriptional and translational control. The sequence is that of Integration host factor subunit alpha from Methylobacterium sp. (strain 4-46).